Consider the following 319-residue polypeptide: Glutathione synthetase (319 aa).

Positions 129–314 constitute an ATP-grasp domain; sequence KLAILNFSRF…VAAMFADAVA (186 aa). 155 to 211 is an ATP binding site; it reads LKEHGDIIIKPLDGMGGMGIFRLTEKDPNIGSILETLMQLDSRTIMAQRYIPEIVHG. Mg(2+) contacts are provided by Glu-285 and Asn-287.

It belongs to the prokaryotic GSH synthase family. It depends on Mg(2+) as a cofactor. Mn(2+) serves as cofactor.

It catalyses the reaction gamma-L-glutamyl-L-cysteine + glycine + ATP = glutathione + ADP + phosphate + H(+). It participates in sulfur metabolism; glutathione biosynthesis; glutathione from L-cysteine and L-glutamate: step 2/2. The protein is Glutathione synthetase of Neisseria meningitidis serogroup B (strain ATCC BAA-335 / MC58).